A 271-amino-acid chain; its full sequence is Elongation factor Ts (271 aa).

The segment at 76 to 79 (TDFV) is involved in Mg(2+) ion dislocation from EF-Tu.

It belongs to the EF-Ts family.

The protein localises to the cytoplasm. Associates with the EF-Tu.GDP complex and induces the exchange of GDP to GTP. It remains bound to the aminoacyl-tRNA.EF-Tu.GTP complex up to the GTP hydrolysis stage on the ribosome. The polypeptide is Elongation factor Ts (Mycobacterium ulcerans (strain Agy99)).